Reading from the N-terminus, the 352-residue chain is UDP-N-acetylglucosamine--N-acetylmuramyl-(pentapeptide) pyrophosphoryl-undecaprenol N-acetylglucosamine transferase (352 aa).

Residues 14–16, Asn124, Arg164, Ser185, and Gln285 each bind UDP-N-acetyl-alpha-D-glucosamine; that span reads TGG.

Belongs to the glycosyltransferase 28 family. MurG subfamily.

The protein localises to the cell inner membrane. The enzyme catalyses di-trans,octa-cis-undecaprenyl diphospho-N-acetyl-alpha-D-muramoyl-L-alanyl-D-glutamyl-meso-2,6-diaminopimeloyl-D-alanyl-D-alanine + UDP-N-acetyl-alpha-D-glucosamine = di-trans,octa-cis-undecaprenyl diphospho-[N-acetyl-alpha-D-glucosaminyl-(1-&gt;4)]-N-acetyl-alpha-D-muramoyl-L-alanyl-D-glutamyl-meso-2,6-diaminopimeloyl-D-alanyl-D-alanine + UDP + H(+). Its pathway is cell wall biogenesis; peptidoglycan biosynthesis. In terms of biological role, cell wall formation. Catalyzes the transfer of a GlcNAc subunit on undecaprenyl-pyrophosphoryl-MurNAc-pentapeptide (lipid intermediate I) to form undecaprenyl-pyrophosphoryl-MurNAc-(pentapeptide)GlcNAc (lipid intermediate II). The polypeptide is UDP-N-acetylglucosamine--N-acetylmuramyl-(pentapeptide) pyrophosphoryl-undecaprenol N-acetylglucosamine transferase (Chlamydia trachomatis serovar A (strain ATCC VR-571B / DSM 19440 / HAR-13)).